Consider the following 1026-residue polypeptide: Lon protease homolog, mitochondrial (1026 aa).

Residues 1-29 (MLGTRVTRAVYTRAPLKLQLRALGLHRRY) constitute a mitochondrion transit peptide. 2 disordered regions span residues 29–55 (YVHNGSKNDEGSSTSTTTNKEENDKKL) and 185–206 (ASEETKDEETVDKTESATDKVS). The region spanning 62–345 (MLALPISRRP…KSLLVLKKEL (284 aa)) is the Lon N-terminal domain. Residues 185 to 194 (ASEETKDEET) show a composition bias toward acidic residues. A compositionally biased stretch (basic and acidic residues) spans 195–206 (VDKTESATDKVS). 497–504 (GPPGVGKT) contributes to the ATP binding site. The disordered stretch occupies residues 711 to 785 (TEPLVSTSEE…EEEEDTSMIV (75 aa)). The span at 714 to 737 (LVSTSEEPQLSQTNQNISSSSAED) shows a compositional bias: polar residues. Residues 815-1001 (TTPPGVIMGL…DDIYKRLFSG (187 aa)) enclose the Lon proteolytic domain. Residues serine 907 and lysine 950 contribute to the active site.

Belongs to the peptidase S16 family. Homohexamer or homoheptamer. Organized in a ring with a central cavity.

The protein resides in the mitochondrion matrix. The catalysed reaction is Hydrolysis of proteins in presence of ATP.. Functionally, ATP-dependent serine protease that mediates the selective degradation of misfolded, unassembled or oxidatively damaged polypeptides as well as certain short-lived regulatory proteins in the mitochondrial matrix. May also have a chaperone function in the assembly of inner membrane protein complexes. Participates in the regulation of mitochondrial gene expression and in the maintenance of the integrity of the mitochondrial genome. Binds to mitochondrial DNA in a site-specific manner. This chain is Lon protease homolog, mitochondrial, found in Candida glabrata (strain ATCC 2001 / BCRC 20586 / JCM 3761 / NBRC 0622 / NRRL Y-65 / CBS 138) (Yeast).